We begin with the raw amino-acid sequence, 336 residues long: MLFDAALLLSFGGPDGPEQVRPFLENVTRGCNVPPERLDEVTKHYLHFGGVSPINGINLALVNELQVELDLPVYFGNRNWEPYIEDSVVTMRDDGIRCAAVFITSAWSGYSSCTRYVEAIARARRRAGTGAPNLVKLRPYFDHPLFVEMFVDAITAAAASLPAALRSEARLVFTAHSVPVATDRRCGPALYSRQVGYAARLVAAGAGYADYDLTWQSRSGPPYVPWLAPDVGDQLMTLASAGTKAVIVCPIGFVADHIEVVWDLDHELRSQADAAGVAFARAATPNADRRFARLAASLIDELTHDRVPVRVNGSDPVPGCLASINGVPCDLPHCVA.

Fe-coproporphyrin III-binding residues include S52 and Y116. 2 residues coordinate Fe(2+): H176 and E259.

Belongs to the ferrochelatase family.

The protein localises to the cytoplasm. It catalyses the reaction Fe-coproporphyrin III + 2 H(+) = coproporphyrin III + Fe(2+). The protein operates within porphyrin-containing compound metabolism; protoheme biosynthesis. Functionally, involved in coproporphyrin-dependent heme b biosynthesis. Catalyzes the insertion of ferrous iron into coproporphyrin III to form Fe-coproporphyrin III. This chain is Coproporphyrin III ferrochelatase, found in Mycobacterium leprae (strain Br4923).